The chain runs to 475 residues: Protein trichome birefringence-like 6 (475 aa).

A helical; Signal-anchor for type II membrane protein transmembrane segment spans residues 14 to 34; that stretch reads VLAFIITIISSAIVFFTFFSS. A GDS motif motif is present at residues 211 to 213; that stretch reads GDS. The DCXHWCLPGXXDXWN motif motif lies at 450–464; it reads DCSHWCLPGVPDTWN.

Belongs to the PC-esterase family. TBL subfamily.

It localises to the membrane. Functionally, may act as a bridging protein that binds pectin and other cell wall polysaccharides. Probably involved in maintaining esterification of pectins. May be involved in the specific O-acetylation of cell wall polymers. The protein is Protein trichome birefringence-like 6 (TBL6) of Arabidopsis thaliana (Mouse-ear cress).